The chain runs to 434 residues: Solute carrier RCH1 (434 aa).

Residues 1–15 (MKTQYSLIRKIWAHS) are Cytoplasmic-facing. The chain crosses the membrane as a helical span at residues 16–36 (VTEFLKSQWFFICLAILIVIA). The Extracellular segment spans residues 37-50 (RFAPNFARDGGLIK). Residues 51-71 (GQYSIGYGCVAWIFLQSGLGM) form a helical membrane-spanning segment. The Cytoplasmic portion of the chain corresponds to 72 to 87 (KSRSLMANMLNWRAHA). Residues 88–108 (TILVLSFLITSSIVYGFCCAV) form a helical membrane-spanning segment. Over 109 to 118 (KAANDPKIDD) the chain is Extracellular. Residues 119–139 (WVLIGLILTATCPTTVASNVI) traverse the membrane as a helical segment. At 140 to 149 (MTTNAGGNSL) the chain is on the cytoplasmic side. Residues 150–170 (LCVCEVFIGNLLGAFITPALV) traverse the membrane as a helical segment. The Extracellular segment spans residues 171 to 199 (QMFTNRAPFAYGNPATGNGIGALYGRVMK). The helical transmembrane segment at 200–220 (QVGLSVFVPLFVGQVIQNCFP) threads the bilayer. Topologically, residues 221–234 (KGTAYYLGFLKKYH) are cytoplasmic. A helical membrane pass occupies residues 235–255 (IKIGSYMLLLIMFSSFSTAFY). Residues 256-264 (QDAFTSVSH) lie on the Extracellular side of the membrane. A helical transmembrane segment spans residues 265-285 (VCIIFLCFFNLGIYIFFTGLS). Residues 286–327 (YLCARPWFILKLFPHEPIEGKSTRLYRYSYNIFRPFYYSKED) lie on the Cytoplasmic side of the membrane. The chain crosses the membrane as a helical span at residues 328–348 (AICIMFCGPAKTAALGVSLIT). At 349–362 (SQYGDKKEHLGKLL) the chain is on the extracellular side. A helical membrane pass occupies residues 363 to 383 (VPLVLYQVEQVMTANFFVSLF). The Cytoplasmic segment spans residues 384–434 (KRWIQKDAQADGSESSCANENEEVDLEKIISIGTGENQSVLSNNVPYTQPR). Serine 425 is modified (phosphoserine).

The protein belongs to the bile acid:sodium symporter (BASS) (TC 2.A.28) family.

It is found in the cell membrane. The protein localises to the bud neck. Solute carrier protein that negatively regulates the cytosolic calcium homeostasis in response to high levels of extracellular calcium. In Saccharomyces cerevisiae (strain ATCC 204508 / S288c) (Baker's yeast), this protein is Solute carrier RCH1.